A 255-amino-acid polypeptide reads, in one-letter code: Protein NEN4 (255 aa).

Residues 11–174 (VFFDLETNVP…DDVRMNLEVL (164 aa)) form the Exonuclease domain. Positions 14 and 16 each coordinate Mg(2+). The active-site Proton donor/acceptor is the His-161. A Mg(2+)-binding site is contributed by Asp-166.

Mg(2+) is required as a cofactor. As to expression, expressed in the sieve elements and phloem pole pericycle cells.

The protein localises to the nucleus. In terms of biological role, probable exonuclease required for enuclation of sieve elements. This chain is Protein NEN4, found in Arabidopsis thaliana (Mouse-ear cress).